A 388-amino-acid polypeptide reads, in one-letter code: Adenosine deaminase-like protein (388 aa).

Basic residues predominate over residues 1-13 (MPNNSKHKKKQQR). A disordered region spans residues 1–34 (MPNNSKHKKKQQRRQQEAQKKSRAKQIETDKKND). The segment covering 14–34 (RQQEAQKKSRAKQIETDKKND) has biased composition (basic and acidic residues). The Zn(2+) site is built by His-65 and His-67. N(6)-methyl-AMP is bound by residues His-67, His-114, 146 to 149 (TSPK), Asp-186, and Gly-218. His-245 serves as a coordination point for Zn(2+). Residues Glu-248, Asp-326, and Asp-327 each coordinate N(6)-methyl-AMP. Glu-248 acts as the Proton donor in catalysis. Asp-326 is a Zn(2+) binding site.

Belongs to the metallo-dependent hydrolases superfamily. Adenosine and AMP deaminases family. As to quaternary structure, monomer. It depends on Zn(2+) as a cofactor.

It carries out the reaction N(6)-methyl-AMP + H2O + H(+) = IMP + methylamine. Catalyzes the hydrolysis of the free cytosolic methylated adenosine nucleotide N(6)-methyl-AMP (N6-mAMP) to produce inositol monophosphate (IMP) and methylamine. Is required for the catabolism of cytosolic N6-mAMP, which is derived from the degradation of mRNA containing N6-methylated adenine (m6A). The polypeptide is Adenosine deaminase-like protein (Caenorhabditis elegans).